Here is a 1072-residue protein sequence, read N- to C-terminus: RIMS-binding protein 2 (1072 aa).

One can recognise an SH3 1 domain in the interval 181 to 248 (GKVHLCVARY…PSNFVDFIQD (68 aa)). Fibronectin type-III domains follow at residues 311-404 (VPYP…GKDV), 407-489 (APSQ…KKEA), and 503-604 (PPQD…VPPA). Disordered regions lie at residues 597–681 (PDLL…APVS) and 713–800 (SAGQ…TSHN). Residues 599-615 (LLVPPAPHPRTAPPPKP) show a composition bias toward pro residues. A compositionally biased stretch (basic and acidic residues) spans 620–635 (MDTKDQHLGPHVKVDE). Residues 660–670 (GPGRRSPSPSR) show a composition bias toward low complexity. 2 positions are modified to phosphoserine: serine 720 and serine 728. Basic and acidic residues-rich tracts occupy residues 730–743 (EVKR…DFLK) and 754–765 (CHGDEYHTESSR). Positions 771 to 781 (DIMEEDEEELY) are enriched in acidic residues. Phosphoserine is present on residues serine 852 and serine 859. Threonine 861 carries the phosphothreonine modification. SH3 domains lie at 868 to 936 (LPAR…EIHA) and 972 to 1039 (VPTR…EVPD). Positions 1044-1072 (HLSDAPPHYSHDPPMRSKAKRKKSVHFTP) are disordered. Positions 1060 to 1072 (SKAKRKKSVHFTP) are enriched in basic residues.

The protein belongs to the RIMBP family. In terms of assembly, interacts with RIMS1, RIMS2, CACNA1D and CACNA1B, and potentially with other Ca(2+) channel alpha-1 isoforms.

The protein localises to the cell membrane. Its subcellular location is the synapse. Plays a role in the synaptic transmission as bifunctional linker that interacts simultaneously with RIMS1, RIMS2, CACNA1D and CACNA1B. In Mus musculus (Mouse), this protein is RIMS-binding protein 2 (Rimbp2).